Reading from the N-terminus, the 277-residue chain is Phosphate import ATP-binding protein PstB (277 aa).

The ABC transporter domain maps to 31 to 272 (LEVPGLNLFY…PAKKQTEDYI (242 aa)). An ATP-binding site is contributed by 63–70 (GPSGCGKS).

It belongs to the ABC transporter superfamily. Phosphate importer (TC 3.A.1.7) family. The complex is composed of two ATP-binding proteins (PstB), two transmembrane proteins (PstC and PstA) (Potential). PstS is missing in this species.

The protein resides in the cell inner membrane. It catalyses the reaction phosphate(out) + ATP + H2O = ADP + 2 phosphate(in) + H(+). Its function is as follows. Part of the ABC transporter complex PstSACB involved in phosphate import. Responsible for energy coupling to the transport system. This is Phosphate import ATP-binding protein PstB from Pseudomonas aeruginosa (strain ATCC 15692 / DSM 22644 / CIP 104116 / JCM 14847 / LMG 12228 / 1C / PRS 101 / PAO1).